A 428-amino-acid chain; its full sequence is Glutamate-1-semialdehyde 2,1-aminomutase (428 aa).

Lys-265 carries the post-translational modification N6-(pyridoxal phosphate)lysine.

The protein belongs to the class-III pyridoxal-phosphate-dependent aminotransferase family. HemL subfamily. Homodimer. Requires pyridoxal 5'-phosphate as cofactor.

It localises to the cytoplasm. It catalyses the reaction (S)-4-amino-5-oxopentanoate = 5-aminolevulinate. Its pathway is porphyrin-containing compound metabolism; protoporphyrin-IX biosynthesis; 5-aminolevulinate from L-glutamyl-tRNA(Glu): step 2/2. This chain is Glutamate-1-semialdehyde 2,1-aminomutase, found in Aeromonas salmonicida (strain A449).